Reading from the N-terminus, the 291-residue chain is Formamidopyrimidine-DNA glycosylase (291 aa).

The Schiff-base intermediate with DNA role is filled by Pro-2. Glu-3 serves as the catalytic Proton donor. Lys-58 functions as the Proton donor; for beta-elimination activity in the catalytic mechanism. DNA contacts are provided by His-100, Arg-123, and Lys-166. The FPG-type zinc finger occupies 257–291; it reads SVYGREGKECFQCGIPITRISQSGRSSFYCSQCQK. Arg-281 functions as the Proton donor; for delta-elimination activity in the catalytic mechanism.

Belongs to the FPG family. In terms of assembly, monomer. Requires Zn(2+) as cofactor.

The enzyme catalyses Hydrolysis of DNA containing ring-opened 7-methylguanine residues, releasing 2,6-diamino-4-hydroxy-5-(N-methyl)formamidopyrimidine.. It carries out the reaction 2'-deoxyribonucleotide-(2'-deoxyribose 5'-phosphate)-2'-deoxyribonucleotide-DNA = a 3'-end 2'-deoxyribonucleotide-(2,3-dehydro-2,3-deoxyribose 5'-phosphate)-DNA + a 5'-end 5'-phospho-2'-deoxyribonucleoside-DNA + H(+). Involved in base excision repair of DNA damaged by oxidation or by mutagenic agents. Acts as a DNA glycosylase that recognizes and removes damaged bases. Has a preference for oxidized purines, such as 7,8-dihydro-8-oxoguanine (8-oxoG). Has AP (apurinic/apyrimidinic) lyase activity and introduces nicks in the DNA strand. Cleaves the DNA backbone by beta-delta elimination to generate a single-strand break at the site of the removed base with both 3'- and 5'-phosphates. This chain is Formamidopyrimidine-DNA glycosylase, found in Bartonella quintana (strain Toulouse) (Rochalimaea quintana).